We begin with the raw amino-acid sequence, 128 residues long: 3-aminoacrylate deaminase RutC (128 aa).

This sequence belongs to the RutC family. In terms of assembly, homotrimer.

The catalysed reaction is (Z)-3-aminoacrylate + H2O + H(+) = 3-oxopropanoate + NH4(+). Its function is as follows. Involved in pyrimidine catabolism. Catalyzes the deamination of 3-aminoacrylate to malonic semialdehyde, a reaction that can also occur spontaneously. RutC may facilitate the reaction and modulate the metabolic fitness, rather than catalyzing essential functions. The sequence is that of 3-aminoacrylate deaminase RutC from Escherichia coli O103:H2 (strain 12009 / EHEC).